The primary structure comprises 400 residues: Na(+)/H(+) antiporter NhaA (400 aa).

The next 11 helical transmembrane spans lie at 10 to 30 (FNLE…AMII), 60 to 80 (AHHW…GLEL), 95 to 115 (IILP…VYLF), 126 to 146 (GWAI…SLLG), 155 to 175 (VFLV…IALF), 178 to 198 (NDLS…LYML), 218 to 238 (IAVL…ALFI), 265 to 285 (GILP…AGFG), 295 to 315 (IAAG…WLIF), 334 to 354 (AALL…LAFA), and 364 to 384 (LGII…LKTT).

It belongs to the NhaA Na(+)/H(+) (TC 2.A.33) antiporter family.

It localises to the cell inner membrane. The enzyme catalyses Na(+)(in) + 2 H(+)(out) = Na(+)(out) + 2 H(+)(in). In terms of biological role, na(+)/H(+) antiporter that extrudes sodium in exchange for external protons. In Psychrobacter arcticus (strain DSM 17307 / VKM B-2377 / 273-4), this protein is Na(+)/H(+) antiporter NhaA.